The chain runs to 121 residues: Large ribosomal subunit protein bL21c (121 aa).

The protein belongs to the bacterial ribosomal protein bL21 family. In terms of assembly, part of the 50S ribosomal subunit.

It is found in the plastid. The protein resides in the chloroplast. Functionally, this protein binds to 23S rRNA. The sequence is that of Large ribosomal subunit protein bL21c from Huperzia lucidula (Shining clubmoss).